We begin with the raw amino-acid sequence, 199 residues long: Translation initiation factor IF-3 (199 aa).

This sequence belongs to the IF-3 family. Monomer.

The protein resides in the cytoplasm. In terms of biological role, IF-3 binds to the 30S ribosomal subunit and shifts the equilibrium between 70S ribosomes and their 50S and 30S subunits in favor of the free subunits, thus enhancing the availability of 30S subunits on which protein synthesis initiation begins. In Mycoplasmopsis pulmonis (strain UAB CTIP) (Mycoplasma pulmonis), this protein is Translation initiation factor IF-3.